A 119-amino-acid polypeptide reads, in one-letter code: Ribonuclease P protein component (119 aa).

Belongs to the RnpA family. In terms of assembly, consists of a catalytic RNA component (M1 or rnpB) and a protein subunit.

It carries out the reaction Endonucleolytic cleavage of RNA, removing 5'-extranucleotides from tRNA precursor.. Functionally, RNaseP catalyzes the removal of the 5'-leader sequence from pre-tRNA to produce the mature 5'-terminus. It can also cleave other RNA substrates such as 4.5S RNA. The protein component plays an auxiliary but essential role in vivo by binding to the 5'-leader sequence and broadening the substrate specificity of the ribozyme. The polypeptide is Ribonuclease P protein component (Syntrophus aciditrophicus (strain SB)).